Reading from the N-terminus, the 80-residue chain is RNA-binding protein Hfq (80 aa).

A Sm domain is found at 10-70; sequence DIFLNQVRKE…ISTISPMKSV (61 aa).

Belongs to the Hfq family. In terms of assembly, homohexamer.

Functionally, RNA chaperone that binds small regulatory RNA (sRNAs) and mRNAs to facilitate mRNA translational regulation in response to envelope stress, environmental stress and changes in metabolite concentrations. Also binds with high specificity to tRNAs. This is RNA-binding protein Hfq from Ruminiclostridium cellulolyticum (strain ATCC 35319 / DSM 5812 / JCM 6584 / H10) (Clostridium cellulolyticum).